A 1345-amino-acid polypeptide reads, in one-letter code: DNA-directed RNA polymerase subunit beta (1345 aa).

This sequence belongs to the RNA polymerase beta chain family. As to quaternary structure, the RNAP catalytic core consists of 2 alpha, 1 beta, 1 beta' and 1 omega subunit. When a sigma factor is associated with the core the holoenzyme is formed, which can initiate transcription.

The catalysed reaction is RNA(n) + a ribonucleoside 5'-triphosphate = RNA(n+1) + diphosphate. DNA-dependent RNA polymerase catalyzes the transcription of DNA into RNA using the four ribonucleoside triphosphates as substrates. The chain is DNA-directed RNA polymerase subunit beta from Shewanella sp. (strain ANA-3).